The primary structure comprises 535 residues: Sucrose transport protein SUT5 (535 aa).

At 1–53 the chain is on the cytoplasmic side; the sequence is MEEGRRGDREGKSAAGWTALSTTKTTLEEKRRLQANGSVGGDAGTSGFRRIVR. A helical transmembrane segment spans residues 54 to 74; the sequence is LFFACMVAGGIQYGWALQLSL. Residues 75-87 are Extracellular-facing; the sequence is LSPYSQTLGISHS. Residues 88 to 108 traverse the membrane as a helical segment; sequence YVSLTWICGPIAGFVVQPIVG. Residues 109-122 are Cytoplasmic-facing; sequence YYSDRCTMKMGRRR. A helical membrane pass occupies residues 123–143; that stretch reads PFILVGCLIICISVMIIGFSA. The Extracellular segment spans residues 144 to 163; the sequence is DIGRHLGDTKEHCSTYTGPR. A helical membrane pass occupies residues 164–184; that stretch reads WSAAMVYIVGFWFLDFANNTV. The Cytoplasmic portion of the chain corresponds to 185–203; that stretch reads QGPARAMMADLSAGHHGPN. A helical membrane pass occupies residues 204-224; the sequence is VGQSIFSLWMAIGSVLGYLSG. Topologically, residues 225–249 are extracellular; the sequence is ANGKWHEWFPWLKTAACCDACANLK. A helical membrane pass occupies residues 250–270; that stretch reads GAFFTAVLLIVVSMTVTMYLA. At 271-302 the chain is on the cytoplasmic side; sequence DEMPLDKQDVDTSGGGGCAVFVDLFKSLRNLP. Residues 303 to 323 traverse the membrane as a helical segment; the sequence is PAMFKVLAVTAVTWLSWFPFI. The Extracellular segment spans residues 324–354; the sequence is QYNTDWMGREIYHGEPQGTAAKADVYDAGVR. The chain crosses the membrane as a helical span at residues 355–375; that stretch reads EGAMGLLFCSVALGVTSFVIP. Over 376–384 the chain is Cytoplasmic; it reads KLCRRLTSK. The helical transmembrane segment at 385-405 threads the bilayer; that stretch reads VVWSISNFLVFALMAVMVAVG. The Extracellular portion of the chain corresponds to 406–429; that stretch reads MVSMRGYRPSLAAGLTGPDPTLKA. A helical membrane pass occupies residues 430 to 450; sequence VALVVFALIGIPQAVLFSVPW. Topologically, residues 451-465 are cytoplasmic; sequence AVASEVTAEEGGGQG. Residues 466–486 form a helical membrane-spanning segment; sequence LAIGVLNIAIVVPQLVIALTA. Over 487–498 the chain is Extracellular; sequence GPIDGAFNKGNT. Residues 499–519 form a helical membrane-spanning segment; that stretch reads PAFGIGGAFAFICGVLALIWL. The Cytoplasmic segment spans residues 520-535; it reads PKTRGVSNAAVVAGGH.

It belongs to the glycoside-pentoside-hexuronide (GPH) cation symporter transporter (TC 2.A.2.4) family. In terms of assembly, homodimer. As to expression, widely expressed. Highest expression in sink leaves and lowest in germinating seeds.

It is found in the cell membrane. Its pathway is glycan biosynthesis; sucrose metabolism. Functionally, responsible for the transport of sucrose into the cell, with the concomitant uptake of protons (symport system). Can also transport other glucosides such as maltose, arbutin, salicin, helicin, alpha-phenylglucoside and beta-phenylglucoside. The polypeptide is Sucrose transport protein SUT5 (SUT5) (Oryza sativa subsp. japonica (Rice)).